The primary structure comprises 371 residues: tRNA-specific 2-thiouridylase MnmA (371 aa).

ATP contacts are provided by residues 13–20 (GMSGGVDS) and Met39. Residues 99–101 (NPD) are interaction with target base in tRNA. The active-site Nucleophile is Cys104. The cysteines at positions 104 and 200 are disulfide-linked. Gly128 lines the ATP pocket. Positions 150–152 (KDQ) are interaction with tRNA. The active-site Cysteine persulfide intermediate is the Cys200. Positions 308-309 (RY) are interaction with tRNA.

It belongs to the MnmA/TRMU family.

It is found in the cytoplasm. It catalyses the reaction S-sulfanyl-L-cysteinyl-[protein] + uridine(34) in tRNA + AH2 + ATP = 2-thiouridine(34) in tRNA + L-cysteinyl-[protein] + A + AMP + diphosphate + H(+). Its function is as follows. Catalyzes the 2-thiolation of uridine at the wobble position (U34) of tRNA, leading to the formation of s(2)U34. This Bacillus thuringiensis (strain Al Hakam) protein is tRNA-specific 2-thiouridylase MnmA.